Reading from the N-terminus, the 445-residue chain is UPF0210 protein SSU05_0296 (445 aa).

The protein belongs to the UPF0210 family. In terms of assembly, homodimer.

The sequence is that of UPF0210 protein SSU05_0296 from Streptococcus suis (strain 05ZYH33).